We begin with the raw amino-acid sequence, 203 residues long: Dephospho-CoA kinase (203 aa).

A DPCK domain is found at 5 to 203 (IVGLTGGIAS…VVYRVAASEH (199 aa)). 13–18 (ASGKSA) serves as a coordination point for ATP.

The protein belongs to the CoaE family.

The protein localises to the cytoplasm. The enzyme catalyses 3'-dephospho-CoA + ATP = ADP + CoA + H(+). The protein operates within cofactor biosynthesis; coenzyme A biosynthesis; CoA from (R)-pantothenate: step 5/5. Functionally, catalyzes the phosphorylation of the 3'-hydroxyl group of dephosphocoenzyme A to form coenzyme A. The chain is Dephospho-CoA kinase from Xanthomonas euvesicatoria pv. vesicatoria (strain 85-10) (Xanthomonas campestris pv. vesicatoria).